Consider the following 893-residue polypeptide: cGMP-specific 3',5'-cyclic phosphodiesterase (893 aa).

2 GAF domains span residues Asp21 to Ile173 and Asn205 to Ile390. Positions Gly420–Val743 constitute a PDEase domain. His496 serves as the catalytic Proton donor. The a divalent metal cation site is built by His500, His536, Asp537, and Asp647. Disordered regions lie at residues Gln784–Ile807 and His844–Leu893. Basic and acidic residues-rich tracts occupy residues Gly789 to Arg800 and His844 to Ser853. Over residues Ser864 to Val880 the composition is skewed to low complexity. Positions Ser883–Leu893 are enriched in basic residues. A Cysteine methyl ester modification is found at Cys890. Cys890 carries the S-farnesyl cysteine lipid modification. The propeptide at Ala891–Leu893 is removed in mature form.

Belongs to the cyclic nucleotide phosphodiesterase family. As to quaternary structure, interacts with PrBP. A divalent metal cation is required as a cofactor.

It localises to the cell membrane. The enzyme catalyses 3',5'-cyclic GMP + H2O = GMP + H(+). Functionally, has a role regulating cGMP transport in Malpighian tubule principal cells. The polypeptide is cGMP-specific 3',5'-cyclic phosphodiesterase (Drosophila virilis (Fruit fly)).